A 147-amino-acid polypeptide reads, in one-letter code: Shadow of prion protein (147 aa).

A signal peptide spans 1–24 (MNWTAATCWALLLAAAFLCDSCSA). A compositionally biased stretch (gly residues) spans 26 to 43 (GGRGGARGSARGVRGGAR). Residues 26-45 (GGRGGARGSARGVRGGARGA) form a disordered region. N-linked (GlcNAc...) asparagine glycosylation is present at N107. G122 is lipidated: GPI-anchor amidated glycine. A propeptide spans 123–147 (SGSVHSPRICLLLGGTLGALELLRP) (removed in mature form).

It belongs to the SPRN family. N-glycosylated. Mainly expressed in brain (at protein level). In brain, it is highly expressed in the hippocampus and cerebellum and is also expressed at lower level in other areas of the brain including the cerebral cortex, the thalamus and the medulla. In hippocampus and cerebellum it is highly expressed in the cell bodies of pyramidal cells and Purkinje cells, respectively.

It localises to the cell membrane. Prion-like protein that has PrP(C)-like neuroprotective activity. May act as a modulator for the biological actions of normal and abnormal PrP. The sequence is that of Shadow of prion protein (Sprn) from Mus musculus (Mouse).